Here is a 55-residue protein sequence, read N- to C-terminus: Large ribosomal subunit protein bL33 (55 aa).

The protein belongs to the bacterial ribosomal protein bL33 family.

This chain is Large ribosomal subunit protein bL33, found in Mycobacterium leprae (strain Br4923).